We begin with the raw amino-acid sequence, 55 residues long: Chromatin protein Cren7 (55 aa).

The protein belongs to the Cren7 family. As to quaternary structure, monomer. In terms of processing, methylated at multiple sites, to varying extents.

The protein resides in the chromosome. It is found in the cytoplasm. In terms of biological role, a chromatin protein, binds double-stranded DNA without sequence specificity. Constrains negative DNA supercoils. The protein is Chromatin protein Cren7 of Ignicoccus hospitalis (strain KIN4/I / DSM 18386 / JCM 14125).